The following is a 142-amino-acid chain: Glia maturation factor gamma (142 aa).

An N-acetylserine modification is found at Ser2. Residues 4-139 form the ADF-H domain; it reads SLVVCEVDPE…TETWLKEKLA (136 aa).

Belongs to the actin-binding proteins ADF family. GMF subfamily.

This is Glia maturation factor gamma (Gmfg) from Mus musculus (Mouse).